Here is a 512-residue protein sequence, read N- to C-terminus: Maturase K (512 aa).

Belongs to the intron maturase 2 family. MatK subfamily.

Its subcellular location is the plastid. It localises to the chloroplast. Usually encoded in the trnK tRNA gene intron. Probably assists in splicing its own and other chloroplast group II introns. The polypeptide is Maturase K (Lemna minor (Common duckweed)).